We begin with the raw amino-acid sequence, 261 residues long: Flap endonuclease Xni (261 aa).

Asp-105 serves as a coordination point for Mg(2+). The 5'-3' exonuclease domain occupies 164–256 (SQFLDLMALA…DFRVNSPTKA (93 aa)). Leu-172, Ala-173, Pro-181, Ile-183, and Ile-186 together coordinate K(+). The interval 185–190 (GIGPKS) is interaction with DNA.

Belongs to the Xni family. Mg(2+) serves as cofactor. Requires K(+) as cofactor.

Functionally, has flap endonuclease activity. During DNA replication, flap endonucleases cleave the 5'-overhanging flap structure that is generated by displacement synthesis when DNA polymerase encounters the 5'-end of a downstream Okazaki fragment. The protein is Flap endonuclease Xni of Shewanella oneidensis (strain ATCC 700550 / JCM 31522 / CIP 106686 / LMG 19005 / NCIMB 14063 / MR-1).